The following is a 182-amino-acid chain: Interferon beta (182 aa).

Positions 1 to 21 (MNNRWILHAAFLLCFSTTALS) are cleaved as a signal peptide. At tyrosine 24 the chain carries Phosphotyrosine. Residues asparagine 50, asparagine 90, and asparagine 97 are each glycosylated (N-linked (GlcNAc...) asparagine).

Belongs to the alpha/beta interferon family. Monomer. Post-translationally, this beta interferon does not have a disulfide bond.

Its subcellular location is the secreted. In terms of biological role, type I interferon cytokine that plays a key role in the innate immune response to infection, developing tumors and other inflammatory stimuli. Signals via binding to high-affinity (IFNAR2) and low-affinity (IFNAR1) heterodimeric receptor, activating the canonical Jak-STAT signaling pathway resulting in transcriptional activation or repression of interferon-regulated genes that encode the effectors of the interferon response, such as antiviral proteins, regulators of cell proliferation and differentiation, and immunoregulatory proteins. Signals mostly via binding to a IFNAR1-IFNAR2 heterodimeric receptor, but can also function with IFNAR1 alone and independently of Jak-STAT pathways. Elicits a wide variety of responses, including antiviral and antibacterial activities, and can regulate the development of B-cells, myelopoiesis and lipopolysaccharide (LPS)-inducible production of tumor necrosis factor. Plays a role in neuronal homeostasis by regulating dopamine turnover and protecting dopaminergic neurons: acts by promoting neuronal autophagy and alpha-synuclein clearance, thereby preventing dopaminergic neuron loss. IFNB1 is more potent than interferon-alpha (IFN-alpha) in inducing the apoptotic and antiproliferative pathways required for control of tumor cell growth. This Mus musculus (Mouse) protein is Interferon beta.